The chain runs to 63 residues: Beta-defensin 3 (63 aa).

A signal peptide spans 1–20; sequence MRIHYLLFAFLLVLLSPPAA. Positions 21–22 are excised as a propeptide; sequence FS. Intrachain disulfides connect C31–C59, C38–C52, and C42–C60.

It belongs to the beta-defensin family. LAP/TAP subfamily. As to expression, highest expression in salivary glands, epididymis, ovary and pancreas and to a lesser extent in lung, liver and brain. Low or no expression in skeletal muscle and tongue.

The protein resides in the secreted. Antimicrobial activity against Gram-negative bacteria E.coli and P.aeruginosa. This chain is Beta-defensin 3 (Defb3), found in Mus musculus (Mouse).